We begin with the raw amino-acid sequence, 289 residues long: Diaminopimelate epimerase (289 aa).

Substrate-binding residues include asparagine 11 and asparagine 78. Cysteine 87 functions as the Proton donor in the catalytic mechanism. Substrate is bound by residues glycine 88–asparagine 89, asparagine 163, asparagine 199, and glutamate 217–arginine 218. Cysteine 226 serves as the catalytic Proton acceptor. Glycine 227 to threonine 228 contributes to the substrate binding site.

Belongs to the diaminopimelate epimerase family. As to quaternary structure, homodimer.

The protein localises to the cytoplasm. The catalysed reaction is (2S,6S)-2,6-diaminopimelate = meso-2,6-diaminopimelate. Its pathway is amino-acid biosynthesis; L-lysine biosynthesis via DAP pathway; DL-2,6-diaminopimelate from LL-2,6-diaminopimelate: step 1/1. Functionally, catalyzes the stereoinversion of LL-2,6-diaminopimelate (L,L-DAP) to meso-diaminopimelate (meso-DAP), a precursor of L-lysine and an essential component of the bacterial peptidoglycan. This chain is Diaminopimelate epimerase, found in Mycobacterium bovis (strain ATCC BAA-935 / AF2122/97).